A 369-amino-acid chain; its full sequence is 4-hydroxy-3-methylbut-2-en-1-yl diphosphate synthase (flavodoxin) (369 aa).

The [4Fe-4S] cluster site is built by Cys270, Cys273, Cys305, and Glu312.

It belongs to the IspG family. The cofactor is [4Fe-4S] cluster.

The enzyme catalyses (2E)-4-hydroxy-3-methylbut-2-enyl diphosphate + oxidized [flavodoxin] + H2O + 2 H(+) = 2-C-methyl-D-erythritol 2,4-cyclic diphosphate + reduced [flavodoxin]. It participates in isoprenoid biosynthesis; isopentenyl diphosphate biosynthesis via DXP pathway; isopentenyl diphosphate from 1-deoxy-D-xylulose 5-phosphate: step 5/6. Its function is as follows. Converts 2C-methyl-D-erythritol 2,4-cyclodiphosphate (ME-2,4cPP) into 1-hydroxy-2-methyl-2-(E)-butenyl 4-diphosphate. The protein is 4-hydroxy-3-methylbut-2-en-1-yl diphosphate synthase (flavodoxin) of Pseudomonas savastanoi pv. phaseolicola (strain 1448A / Race 6) (Pseudomonas syringae pv. phaseolicola (strain 1448A / Race 6)).